Here is a 300-residue protein sequence, read N- to C-terminus: N-acetylmuramic acid 6-phosphate etherase 1 (300 aa).

The SIS domain maps to 59-222; that stretch reads AAERFKKGGR…STGIMVKVGN (164 aa). Catalysis depends on E87, which acts as the Proton donor. The active site involves E118.

This sequence belongs to the GCKR-like family. MurNAc-6-P etherase subfamily. Homodimer.

The enzyme catalyses N-acetyl-D-muramate 6-phosphate + H2O = N-acetyl-D-glucosamine 6-phosphate + (R)-lactate. Its pathway is amino-sugar metabolism; N-acetylmuramate degradation. Specifically catalyzes the cleavage of the D-lactyl ether substituent of MurNAc 6-phosphate, producing GlcNAc 6-phosphate and D-lactate. This is N-acetylmuramic acid 6-phosphate etherase 1 from Enterococcus faecalis (strain ATCC 700802 / V583).